Consider the following 301-residue polypeptide: Acetylglutamate kinase (301 aa).

Substrate is bound by residues 68–69 (GG), Arg90, and Asn195.

It belongs to the acetylglutamate kinase family. ArgB subfamily.

Its subcellular location is the cytoplasm. It carries out the reaction N-acetyl-L-glutamate + ATP = N-acetyl-L-glutamyl 5-phosphate + ADP. The protein operates within amino-acid biosynthesis; L-arginine biosynthesis; N(2)-acetyl-L-ornithine from L-glutamate: step 2/4. Its function is as follows. Catalyzes the ATP-dependent phosphorylation of N-acetyl-L-glutamate. The sequence is that of Acetylglutamate kinase from Ectopseudomonas mendocina (strain ymp) (Pseudomonas mendocina).